The following is a 588-amino-acid chain: Catechol oxidase B, chloroplastic (588 aa).

The transit peptide at Ser1–Ala88 directs the protein to the chloroplast. 2 disulfide bridges follow: Cys99–Cys115 and Cys114–Cys181. Cu cation contacts are provided by His180, His198, His207, His329, His333, and His364. The 2'-(S-cysteinyl)-histidine (Cys-His) cross-link spans Cys184–His198.

It belongs to the tyrosinase family. Cu(2+) is required as a cofactor.

It is found in the plastid. The protein localises to the chloroplast thylakoid lumen. It carries out the reaction 2 catechol + O2 = 2 1,2-benzoquinone + 2 H2O. Its function is as follows. Catalyzes the oxidation of mono- and o-diphenols to o-diquinones. The protein is Catechol oxidase B, chloroplastic of Solanum tuberosum (Potato).